Reading from the N-terminus, the 197-residue chain is MSTYIIINIALLIAIVALIFFLSKKTKSEASYVKSDITNKSYLVQNLPNKEEAAHILGIIDKRISILDDYLRENINKFTEYKPYIEQFNNRIKKLTLYENAPDGKYTSFTVDKGKEIALCLRSRKTGQIHDINLVMYVTLHELAHVACPETDHTELFKKIFIFLIKISIDLNIYKHIDYEADPAEYCGLVIDEDLLK.

Residues 1 to 30 form the signal peptide; the sequence is MSTYIIINIALLIAIVALIFFLSKKTKSEA.

This is an uncharacterized protein from Acanthamoeba polyphaga (Amoeba).